The sequence spans 124 residues: UPF0231 protein Sbal223_3655 (124 aa).

This sequence belongs to the UPF0231 family.

The protein is UPF0231 protein Sbal223_3655 of Shewanella baltica (strain OS223).